The chain runs to 335 residues: Methionyl-tRNA formyltransferase (335 aa).

122 to 125 (SLLP) contacts (6S)-5,6,7,8-tetrahydrofolate. Residues 203–222 (DSHGPLGEPQDPAKVSKAPR) form a disordered region.

Belongs to the Fmt family.

It catalyses the reaction L-methionyl-tRNA(fMet) + (6R)-10-formyltetrahydrofolate = N-formyl-L-methionyl-tRNA(fMet) + (6S)-5,6,7,8-tetrahydrofolate + H(+). Attaches a formyl group to the free amino group of methionyl-tRNA(fMet). The formyl group appears to play a dual role in the initiator identity of N-formylmethionyl-tRNA by promoting its recognition by IF2 and preventing the misappropriation of this tRNA by the elongation apparatus. In Rhodopirellula baltica (strain DSM 10527 / NCIMB 13988 / SH1), this protein is Methionyl-tRNA formyltransferase.